The chain runs to 385 residues: Cytochrome b (385 aa).

The next 4 membrane-spanning stretches (helical) occupy residues 34-54 (FGSILGLCLFLQIATGLILTM), 78-99 (WFIRNFHITGASLFFSCMFIHI), 114-134 (WYSGVILFICAMVTAFFGYVL), and 179-199 (FLVLHFLVPFLMIAVSLTHLL). Heme b contacts are provided by histidine 84 and histidine 98. Positions 183 and 197 each coordinate heme b. Residue histidine 202 coordinates a ubiquinone. 4 consecutive transmembrane segments (helical) span residues 227–247 (FKDILGFLITLSLIFLGSTLF), 289–309 (LMGVFALIMSLSVLLFMPFLI), 321–341 (FMQFTFWLMISNFILLSWLGA), and 348–368 (YTIMSQVTSFLYFFIFLFLFP).

The protein belongs to the cytochrome b family. As to quaternary structure, the cytochrome bc1 complex contains 3 respiratory subunits (MT-CYB, CYC1 and UQCRFS1), 2 core proteins (UQCRC1 and UQCRC2) and probably 6 low-molecular weight proteins. The cofactor is heme b.

It is found in the mitochondrion inner membrane. Component of the ubiquinol-cytochrome c reductase complex (complex III or cytochrome b-c1 complex) that is part of the mitochondrial respiratory chain. The b-c1 complex mediates electron transfer from ubiquinol to cytochrome c. Contributes to the generation of a proton gradient across the mitochondrial membrane that is then used for ATP synthesis. In Myxine glutinosa (Atlantic hagfish), this protein is Cytochrome b (MT-CYB).